The following is a 332-amino-acid chain: Acetyl-coenzyme A carboxylase carboxyl transferase subunit alpha (332 aa).

In terms of domain architecture, CoA carboxyltransferase C-terminal spans 44-298 (QLESRAQNLR…KETLVNNLEE (255 aa)).

The protein belongs to the AccA family. In terms of assembly, acetyl-CoA carboxylase is a heterohexamer composed of biotin carboxyl carrier protein (AccB), biotin carboxylase (AccC) and two subunits each of ACCase subunit alpha (AccA) and ACCase subunit beta (AccD).

The protein localises to the cytoplasm. It catalyses the reaction N(6)-carboxybiotinyl-L-lysyl-[protein] + acetyl-CoA = N(6)-biotinyl-L-lysyl-[protein] + malonyl-CoA. Its pathway is lipid metabolism; malonyl-CoA biosynthesis; malonyl-CoA from acetyl-CoA: step 1/1. Functionally, component of the acetyl coenzyme A carboxylase (ACC) complex. First, biotin carboxylase catalyzes the carboxylation of biotin on its carrier protein (BCCP) and then the CO(2) group is transferred by the carboxyltransferase to acetyl-CoA to form malonyl-CoA. The chain is Acetyl-coenzyme A carboxylase carboxyl transferase subunit alpha from Crocosphaera subtropica (strain ATCC 51142 / BH68) (Cyanothece sp. (strain ATCC 51142)).